The primary structure comprises 104 residues: Large ribosomal subunit protein uL24 (104 aa).

Belongs to the universal ribosomal protein uL24 family. As to quaternary structure, part of the 50S ribosomal subunit.

Functionally, one of two assembly initiator proteins, it binds directly to the 5'-end of the 23S rRNA, where it nucleates assembly of the 50S subunit. One of the proteins that surrounds the polypeptide exit tunnel on the outside of the subunit. The protein is Large ribosomal subunit protein uL24 of Clostridium perfringens (strain SM101 / Type A).